The following is a 217-amino-acid chain: Protein 33K (217 aa).

Positions 1-142 are disordered; the sequence is MPPKGNKQAI…KEKTSAIATR (142 aa). Over residues 24–68 the composition is skewed to acidic residues; sequence QWDEEEESWDDSQAEEVSDEEEMESWESLDEELEDKPPKDEEEEI. Low complexity predominate over residues 69-78; that stretch reads IASAAAPSSK. Over residues 123–136 the composition is skewed to basic and acidic residues; sequence KRSEKTTRPRKEKT. The segment at 160–187 is necessary for nuclear subcellular location; sequence YAIFQQSRGQQLELKVKNRSLRSLTRSC. The RS-repeat; required for splicing enhancer activity stretch occupies residues 166-186; sequence SRGQQLELKVKNRSLRSLTRS.

It belongs to the adenoviridae splicing factor family. Homooligomer. Interacts with DBP; this interaction occurs at a unique vertex during genome packaging. Interacts with IVa2; this interaction occurs at a unique vertex during genome packaging and seems to potentiate IVa2 and 33K oligomerization. Phosphorylated in vitro by human PKA and PRKDC. PRKDC inhibits, whereas PKA activates the splicing factor.

The protein localises to the host nucleus. Promotes alternative splicing of late transcripts by promoting splicing at weak 3' splice sites. Required for the temporal activation of major late pre-mRNA splicing at late times of infection. Induces the splicing and expression of the late capsid vertex protein. Functionally, probably functions as the small terminase that is part of the molecular motor that translocates genomic DNA in empty capsid during DNA packaging. This motor is located at a unique vertex and comprises at least the IVa2 ATPase, the small terminase 33K and probably a portal. Forms a ring-like structure of about 17 nm in which genomic DNA is translocated into the capsid. Stimulates IVa2 ATPase activity in the presence of the viral genome. Once the DNA is packaged, the terminase detaches: the 33K protein is present in the empty particles, but not in the mature virions. Also involved in virion assembly. This is Protein 33K from Human adenovirus F serotype 41 (HAdV-41).